The following is a 516-amino-acid chain: Tyrosine decarboxylase 3 (516 aa).

K319 carries the N6-(pyridoxal phosphate)lysine modification.

Belongs to the group II decarboxylase family. In terms of assembly, homodimer. Requires pyridoxal 5'-phosphate as cofactor.

The catalysed reaction is L-tyrosine + H(+) = tyramine + CO2. The chain is Tyrosine decarboxylase 3 (TYRDC-3) from Petroselinum crispum (Parsley).